The sequence spans 260 residues: Large ribosomal subunit protein uL2 (260 aa).

Residues E208 to S230 are disordered.

This sequence belongs to the universal ribosomal protein uL2 family.

It localises to the cytoplasm. The protein is Large ribosomal subunit protein uL2 of Caenorhabditis elegans.